A 293-amino-acid chain; its full sequence is 4-hydroxy-tetrahydrodipicolinate synthase (293 aa).

Threonine 45 is a binding site for pyruvate. The Proton donor/acceptor role is filled by tyrosine 133. Catalysis depends on lysine 161, which acts as the Schiff-base intermediate with substrate. Residue isoleucine 203 participates in pyruvate binding.

Belongs to the DapA family. Homotetramer; dimer of dimers.

It is found in the cytoplasm. The catalysed reaction is L-aspartate 4-semialdehyde + pyruvate = (2S,4S)-4-hydroxy-2,3,4,5-tetrahydrodipicolinate + H2O + H(+). It functions in the pathway amino-acid biosynthesis; L-lysine biosynthesis via DAP pathway; (S)-tetrahydrodipicolinate from L-aspartate: step 3/4. Functionally, catalyzes the condensation of (S)-aspartate-beta-semialdehyde [(S)-ASA] and pyruvate to 4-hydroxy-tetrahydrodipicolinate (HTPA). The protein is 4-hydroxy-tetrahydrodipicolinate synthase of Pseudoalteromonas atlantica (strain T6c / ATCC BAA-1087).